A 73-amino-acid polypeptide reads, in one-letter code: MKANIHPDYHKITVVMTDGSQYTTRSTWGKEGDVLNLDIDPRTHPAWTGGSQTLVDHGGRISKFKNRFGNLGM.

The protein belongs to the bacterial ribosomal protein bL31 family. Type A subfamily. Part of the 50S ribosomal subunit.

Its function is as follows. Binds the 23S rRNA. The chain is Large ribosomal subunit protein bL31 from Bartonella henselae (strain ATCC 49882 / DSM 28221 / CCUG 30454 / Houston 1) (Rochalimaea henselae).